Consider the following 118-residue polypeptide: UPF0342 protein BPUM_0928 (118 aa).

This sequence belongs to the UPF0342 family.

The chain is UPF0342 protein BPUM_0928 from Bacillus pumilus (strain SAFR-032).